The primary structure comprises 314 residues: Glycerol-1-phosphate dehydrogenase [NAD(P)+] (314 aa).

NAD(+) contacts are provided by residues G52 to D56 and T74 to S77. D79 provides a ligand contact to substrate. S83 is an NAD(+) binding site. Residue D131 participates in substrate binding. The Zn(2+) site is built by D131 and H211. H215 contributes to the substrate binding site. H231 is a binding site for Zn(2+).

The protein belongs to the glycerol-1-phosphate dehydrogenase family. Zn(2+) is required as a cofactor.

Its subcellular location is the cytoplasm. It carries out the reaction sn-glycerol 1-phosphate + NAD(+) = dihydroxyacetone phosphate + NADH + H(+). It catalyses the reaction sn-glycerol 1-phosphate + NADP(+) = dihydroxyacetone phosphate + NADPH + H(+). It functions in the pathway membrane lipid metabolism; glycerophospholipid metabolism. Catalyzes the NAD(P)H-dependent reduction of dihydroxyacetonephosphate (DHAP or glycerone phosphate) to glycerol 1-phosphate (G1P). The G1P thus generated is used as the glycerophosphate backbone of phospholipids in the cellular membranes of Archaea. The polypeptide is Glycerol-1-phosphate dehydrogenase [NAD(P)+] (Korarchaeum cryptofilum (strain OPF8)).